Here is a 75-residue protein sequence, read N- to C-terminus: Insecticidal toxin OcyC10 (75 aa).

Positions 1 to 19 are cleaved as a signal peptide; that stretch reads MNFATKIVILLLVAALILA. Intrachain disulfides connect Cys-50–Cys-62 and Cys-56–Cys-68.

As to expression, expressed by the venom gland.

The protein localises to the secreted. Insecticidal toxin. The polypeptide is Insecticidal toxin OcyC10 (Opisthacanthus cayaporum (South American scorpion)).